The following is a 205-amino-acid chain: NADH-quinone oxidoreductase subunit C (205 aa).

This sequence belongs to the complex I 30 kDa subunit family. In terms of assembly, NDH-1 is composed of 14 different subunits. Subunits NuoB, C, D, E, F, and G constitute the peripheral sector of the complex.

Its subcellular location is the cell inner membrane. It catalyses the reaction a quinone + NADH + 5 H(+)(in) = a quinol + NAD(+) + 4 H(+)(out). NDH-1 shuttles electrons from NADH, via FMN and iron-sulfur (Fe-S) centers, to quinones in the respiratory chain. The immediate electron acceptor for the enzyme in this species is believed to be ubiquinone. Couples the redox reaction to proton translocation (for every two electrons transferred, four hydrogen ions are translocated across the cytoplasmic membrane), and thus conserves the redox energy in a proton gradient. The sequence is that of NADH-quinone oxidoreductase subunit C from Bartonella bacilliformis (strain ATCC 35685 / KC583 / Herrer 020/F12,63).